The chain runs to 461 residues: Phosphoglucosamine mutase (461 aa).

Residue serine 113 is the Phosphoserine intermediate of the active site. Mg(2+) is bound by residues serine 113, aspartate 251, aspartate 253, and aspartate 255. At serine 113 the chain carries Phosphoserine.

Belongs to the phosphohexose mutase family. Mg(2+) is required as a cofactor. Activated by phosphorylation.

The catalysed reaction is alpha-D-glucosamine 1-phosphate = D-glucosamine 6-phosphate. Its function is as follows. Catalyzes the conversion of glucosamine-6-phosphate to glucosamine-1-phosphate. This is Phosphoglucosamine mutase from Prochlorococcus marinus (strain SARG / CCMP1375 / SS120).